The primary structure comprises 177 residues: Adenine phosphoribosyltransferase (177 aa).

It belongs to the purine/pyrimidine phosphoribosyltransferase family. Homodimer.

It localises to the cytoplasm. It catalyses the reaction AMP + diphosphate = 5-phospho-alpha-D-ribose 1-diphosphate + adenine. It functions in the pathway purine metabolism; AMP biosynthesis via salvage pathway; AMP from adenine: step 1/1. Its function is as follows. Catalyzes a salvage reaction resulting in the formation of AMP, that is energically less costly than de novo synthesis. The protein is Adenine phosphoribosyltransferase of Chlorobaculum tepidum (strain ATCC 49652 / DSM 12025 / NBRC 103806 / TLS) (Chlorobium tepidum).